Consider the following 262-residue polypeptide: Small ribosomal subunit protein eS1 (262 aa).

The protein belongs to the eukaryotic ribosomal protein eS1 family. In terms of assembly, component of the small ribosomal subunit. Mature ribosomes consist of a small (40S) and a large (60S) subunit. The 40S subunit contains about 33 different proteins and 1 molecule of RNA (18S). The 60S subunit contains about 49 different proteins and 3 molecules of RNA (25S, 5.8S and 5S).

Its subcellular location is the cytoplasm. In Theileria parva (East coast fever infection agent), this protein is Small ribosomal subunit protein eS1.